The sequence spans 300 residues: MESKVIWSDVLRSWLPKANIFVRMFVNHCQRDGITVSAGHLAYVSLLSLVPFIMVFFTILSAFPAFSEVRGDIEALIFGNFIPTSGDQIQGYVAEFVGNASKMGAIGILSLVVVALLLISNIDKTLNRIWQAKSERPIIFTFAIYWMILTLGPLLIGLSVIMSSYLVAFANSAEAYTMGATTAMLKIVPFIASVCAFFILYMIVPNKRINPRHALVGAFMGALLFELSKKGFSFYITHFPSYQMIYGAMAVIPILFVWVYLSWIVVLLGAELTHVIEVFFHEESKENFTQVDEDDPQSPA.

The next 6 membrane-spanning stretches (helical) occupy residues 46 to 66 (LLSL…FPAF), 103 to 123 (MGAI…SNID), 138 to 158 (IIFT…LIGL), 184 to 204 (MLKI…YMIV), 214 to 234 (ALVG…GFSF), and 248 to 268 (AMAV…VVLL).

This sequence belongs to the UPF0761 family.

It localises to the cell inner membrane. The sequence is that of UPF0761 membrane protein Patl_3954 from Pseudoalteromonas atlantica (strain T6c / ATCC BAA-1087).